Here is an 82-residue protein sequence, read N- to C-terminus: Escargot/snail protein homolog (82 aa).

C2H2-type zinc fingers lie at residues 1–5, 18–40, 44–66, and 72–82; these read HLQFH, FSCKLCDKVYTSLGALKMHIRTH, CKCDICHKAFSRPWLLQGHIRTH, and FSCQHCHRAFA.

This sequence belongs to the snail C2H2-type zinc-finger protein family.

Its subcellular location is the nucleus. The protein is Escargot/snail protein homolog of Bradysia coprophila (Dark-winged fungus gnat).